Reading from the N-terminus, the 232-residue chain is Orotate phosphoribosyltransferase (232 aa).

5-phospho-alpha-D-ribose 1-diphosphate is bound by residues arginine 107, lysine 108, lysine 111, and 133 to 141 (EDLTTDGGS). Threonine 137 lines the orotate pocket.

This sequence belongs to the purine/pyrimidine phosphoribosyltransferase family. PyrE subfamily. Homodimer. It depends on Mg(2+) as a cofactor.

It catalyses the reaction orotidine 5'-phosphate + diphosphate = orotate + 5-phospho-alpha-D-ribose 1-diphosphate. The protein operates within pyrimidine metabolism; UMP biosynthesis via de novo pathway; UMP from orotate: step 1/2. Functionally, catalyzes the transfer of a ribosyl phosphate group from 5-phosphoribose 1-diphosphate to orotate, leading to the formation of orotidine monophosphate (OMP). The polypeptide is Orotate phosphoribosyltransferase (Cereibacter sphaeroides (strain ATCC 17029 / ATH 2.4.9) (Rhodobacter sphaeroides)).